The sequence spans 268 residues: Thiazole synthase (268 aa).

Catalysis depends on Lys108, which acts as the Schiff-base intermediate with DXP. 1-deoxy-D-xylulose 5-phosphate-binding positions include Gly169, 195 to 196, and 217 to 218; these read AG and NS. The tract at residues 248 to 268 is disordered; it reads RLKENPLASPSSPLDGVISNN. Residues 255–268 show a composition bias toward polar residues; the sequence is ASPSSPLDGVISNN.

The protein belongs to the ThiG family. In terms of assembly, homotetramer. Forms heterodimers with either ThiH or ThiS.

It localises to the cytoplasm. It carries out the reaction [ThiS sulfur-carrier protein]-C-terminal-Gly-aminoethanethioate + 2-iminoacetate + 1-deoxy-D-xylulose 5-phosphate = [ThiS sulfur-carrier protein]-C-terminal Gly-Gly + 2-[(2R,5Z)-2-carboxy-4-methylthiazol-5(2H)-ylidene]ethyl phosphate + 2 H2O + H(+). It participates in cofactor biosynthesis; thiamine diphosphate biosynthesis. Its function is as follows. Catalyzes the rearrangement of 1-deoxy-D-xylulose 5-phosphate (DXP) to produce the thiazole phosphate moiety of thiamine. Sulfur is provided by the thiocarboxylate moiety of the carrier protein ThiS. In vitro, sulfur can be provided by H(2)S. This is Thiazole synthase from Prochlorococcus marinus (strain NATL2A).